Reading from the N-terminus, the 1032-residue chain is Probable ATP-dependent RNA helicase DDX46 (1032 aa).

Residues Met1–Ser24 show a composition bias toward basic residues. The interval Met1–Pro227 is disordered. A lipid anchor (N-myristoyl glycine) is attached at Gly2. Positions Ser26–Arg49 are enriched in basic and acidic residues. Composition is skewed to basic residues over residues Glu50 to Ser73 and Glu81 to Arg103. The span at Lys112–Leu200 shows a compositional bias: basic and acidic residues. Residues Asp152 to Lys197 are a coiled coil. A Glycyl lysine isopeptide (Lys-Gly) (interchain with G-Cter in SUMO2) cross-link involves residue Lys186. Ser199 carries the post-translational modification Phosphoserine. A compositionally biased stretch (acidic residues) spans Glu201–Ala211. Residue Lys263 is modified to N6-acetyllysine. At Tyr294 the chain carries Phosphotyrosine. 2 positions are modified to phosphoserine: Ser295 and Ser296. Lys325 is covalently cross-linked (Glycyl lysine isopeptide (Lys-Gly) (interchain with G-Cter in SUMO2)). Residue Ser346 is modified to Phosphoserine. The Q motif motif lies at Lys372–Thr400. Positions Ile403 to Val581 constitute a Helicase ATP-binding domain. Ala416–Thr423 serves as a coordination point for ATP. Residues Asp529–Asp532 carry the DEAD box motif. One can recognise a Helicase C-terminal domain in the interval Asp592–Trp753. The residue at position 776 (Lys776) is an N6-acetyllysine. Lys779 is covalently cross-linked (Glycyl lysine isopeptide (Lys-Gly) (interchain with G-Cter in SUMO2)). Residue Ser804 is modified to Phosphoserine. Lys904 is subject to N6-acetyllysine. Glycyl lysine isopeptide (Lys-Gly) (interchain with G-Cter in SUMO2) cross-links involve residues Lys908 and Lys916. At Ser929 the chain carries Phosphoserine.

This sequence belongs to the DEAD box helicase family. DDX46/PRP5 subfamily. In terms of assembly, component of the 17S U2 SnRNP complex, a ribonucleoprotein complex that contains small nuclear RNA (snRNA) U2 and a number of specific proteins. Within the 17S U2 SnRNP complex, DDX46 is part of the SF3B subcomplex, which is required for 'A' complex assembly formed by the stable binding of U2 snRNP to the branchpoint sequence in pre-mRNA. Recruited to the 17S U2 SnRNP complex following release of DDX42; DDX42 and DDX46 bind the SF3B subcomplex in a competitive manner.

It is found in the nucleus speckle. Its subcellular location is the nucleus. The protein resides in the cajal body. It catalyses the reaction ATP + H2O = ADP + phosphate + H(+). Functionally, component of the 17S U2 SnRNP complex of the spliceosome, a large ribonucleoprotein complex that removes introns from transcribed pre-mRNAs. The 17S U2 SnRNP complex (1) directly participates in early spliceosome assembly and (2) mediates recognition of the intron branch site during pre-mRNA splicing by promoting the selection of the pre-mRNA branch-site adenosine, the nucleophile for the first step of splicing. Within the 17S U2 SnRNP complex, DDX46 plays essential roles during assembly of pre-spliceosome and proofreading of the branch site. The sequence is that of Probable ATP-dependent RNA helicase DDX46 (Ddx46) from Mus musculus (Mouse).